The sequence spans 79 residues: MTHPVDAILDATGLNCPEPVMMLHNKVRDLAPGGLLKVIATDPSTRRDIPKFCVFLGHELVEQQEEAGTYLYWIRKKAD.

Residue Cys-16 is the Cysteine persulfide intermediate of the active site.

Belongs to the sulfur carrier protein TusA family.

The protein localises to the cytoplasm. In terms of biological role, sulfur carrier protein which probably makes part of a sulfur-relay system. The polypeptide is Sulfur carrier protein TusA (Pseudomonas paraeruginosa (strain DSM 24068 / PA7) (Pseudomonas aeruginosa (strain PA7))).